The chain runs to 450 residues: 3-phosphoshikimate 1-carboxyvinyltransferase (450 aa).

Residues 1–26 (MSAHGDPIPMTAHPSGPLSGTAQVPG) are disordered. Residues K28, S29, and R33 each coordinate 3-phosphoshikimate. Residue K28 coordinates phosphoenolpyruvate. Phosphoenolpyruvate-binding residues include G101 and R129. 3-phosphoshikimate-binding residues include S174, Q176, D327, and K354. Q176 provides a ligand contact to phosphoenolpyruvate. D327 serves as the catalytic Proton acceptor. Residues R358 and R403 each coordinate phosphoenolpyruvate.

The protein belongs to the EPSP synthase family. As to quaternary structure, monomer.

The protein localises to the cytoplasm. It carries out the reaction 3-phosphoshikimate + phosphoenolpyruvate = 5-O-(1-carboxyvinyl)-3-phosphoshikimate + phosphate. It participates in metabolic intermediate biosynthesis; chorismate biosynthesis; chorismate from D-erythrose 4-phosphate and phosphoenolpyruvate: step 6/7. Functionally, catalyzes the transfer of the enolpyruvyl moiety of phosphoenolpyruvate (PEP) to the 5-hydroxyl of shikimate-3-phosphate (S3P) to produce enolpyruvyl shikimate-3-phosphate and inorganic phosphate. In Dinoroseobacter shibae (strain DSM 16493 / NCIMB 14021 / DFL 12), this protein is 3-phosphoshikimate 1-carboxyvinyltransferase.